Reading from the N-terminus, the 250-residue chain is L-ascorbate peroxidase 1, cytosolic (250 aa).

Catalysis depends on His-42, which acts as the Proton acceptor. The tract at residues 113-137 (VPFHPGREDKPAPPPEGRLPDATKG) is disordered. Heme b is bound at residue His-163. K(+) contacts are provided by Thr-164, Thr-180, Asn-182, and Asp-187.

It belongs to the peroxidase family. Ascorbate peroxidase subfamily. Requires heme b as cofactor. In terms of tissue distribution, expressed in roots, aerial vegetative parts and reproductive organs. Expressed in roots, leaves, stems and flowers.

The protein resides in the cytoplasm. The enzyme catalyses L-ascorbate + H2O2 = L-dehydroascorbate + 2 H2O. Inhibited by p-chloromercuriphenylsulfonic acid (CMPSA). Functionally, plays a key role in hydrogen peroxide removal. This Oryza sativa subsp. japonica (Rice) protein is L-ascorbate peroxidase 1, cytosolic.